The primary structure comprises 215 residues: Ubiquitin-conjugating enzyme E2 S (215 aa).

The 147-residue stretch at 9 to 155 folds into the UBC core domain; the sequence is DVIKRVVKEL…AKLFTSIHAS (147 aa). Cys-93 (glycyl thioester intermediate) is an active-site residue. Residues 159-215 are disordered; that stretch reads IDSNNNNENSTTTPTTTTTATTPSTNTASISSPVKKKTETTNSTTTKVQPKKSLKRL. Low complexity predominate over residues 161–190; sequence SNNNNENSTTTPTTTTTATTPSTNTASISS.

This sequence belongs to the ubiquitin-conjugating enzyme family.

The enzyme catalyses S-ubiquitinyl-[E1 ubiquitin-activating enzyme]-L-cysteine + [E2 ubiquitin-conjugating enzyme]-L-cysteine = [E1 ubiquitin-activating enzyme]-L-cysteine + S-ubiquitinyl-[E2 ubiquitin-conjugating enzyme]-L-cysteine.. It participates in protein modification; protein ubiquitination. In terms of biological role, catalyzes the covalent attachment of ubiquitin to other proteins. Acts as an essential factor of the anaphase promoting complex/cyclosome (APC/C), a cell cycle-regulated ubiquitin ligase that controls progression through mitosis. Acts by specifically elongating polyubiquitin chains initiated by the E2 enzyme ubch10 on APC/C substrates, enhancing the degradation of APC/C substrates by the proteasome and promoting mitotic exit. In Dictyostelium discoideum (Social amoeba), this protein is Ubiquitin-conjugating enzyme E2 S (ube2s).